The chain runs to 381 residues: tRNA-specific 2-thiouridylase MnmA (381 aa).

ATP is bound by residues 26-33 (AMSGGVDS) and Leu-52. Cys-120 functions as the Nucleophile in the catalytic mechanism. A disulfide bridge connects residues Cys-120 and Cys-217. Residue Gly-144 coordinates ATP. An interaction with tRNA region spans residues 166-168 (RDQ). Catalysis depends on Cys-217, which acts as the Cysteine persulfide intermediate.

This sequence belongs to the MnmA/TRMU family.

The protein localises to the cytoplasm. The enzyme catalyses S-sulfanyl-L-cysteinyl-[protein] + uridine(34) in tRNA + AH2 + ATP = 2-thiouridine(34) in tRNA + L-cysteinyl-[protein] + A + AMP + diphosphate + H(+). Catalyzes the 2-thiolation of uridine at the wobble position (U34) of tRNA, leading to the formation of s(2)U34. This Ruegeria sp. (strain TM1040) (Silicibacter sp.) protein is tRNA-specific 2-thiouridylase MnmA.